The following is a 122-amino-acid chain: Large ribosomal subunit protein uL14 (122 aa).

Belongs to the universal ribosomal protein uL14 family. Part of the 50S ribosomal subunit. Forms a cluster with proteins L3 and L19. In the 70S ribosome, L14 and L19 interact and together make contacts with the 16S rRNA in bridges B5 and B8.

Binds to 23S rRNA. Forms part of two intersubunit bridges in the 70S ribosome. The chain is Large ribosomal subunit protein uL14 from Borrelia recurrentis (strain A1).